The chain runs to 413 residues: Divalent metal cation transporter MntH (413 aa).

11 helical membrane-spanning segments follow: residues 19-39, 46-66, 94-114, 122-142, 156-176, 196-216, 241-261, 290-310, 329-349, 350-370, and 389-409; these read LALMGPAFVAAIGYIDPGNFA, ASFGYQLLWVVVWANLMAMLI, VWFYWVQAEIIAMATDLAEFI, LVLGVSLLQGAVLTGVATFLI, VIGGLLLFVAVAYVVELIFSQ, AVFLAAGVLGATIMPHVIYLH, IAMTIAGFVNLAMMATAAAAF, IFGLSLIAAGLSSTVVGTLAG, AITMLPSFVVILLGLDPTRIL, VMSQVLLSFGIALALVPLLIF, and IGWAIVAIVVSLNGWLIVGSL.

It belongs to the NRAMP family.

It localises to the cell inner membrane. In terms of biological role, h(+)-stimulated, divalent metal cation uptake system. The sequence is that of Divalent metal cation transporter MntH from Klebsiella pneumoniae subsp. pneumoniae (strain ATCC 700721 / MGH 78578).